A 368-amino-acid polypeptide reads, in one-letter code: Peptide chain release factor 2 (368 aa).

Residue Gln250 is modified to N5-methylglutamine.

The protein belongs to the prokaryotic/mitochondrial release factor family. Methylated by PrmC. Methylation increases the termination efficiency of RF2.

The protein resides in the cytoplasm. Its function is as follows. Peptide chain release factor 2 directs the termination of translation in response to the peptide chain termination codons UGA and UAA. The polypeptide is Peptide chain release factor 2 (Rickettsia africae (strain ESF-5)).